The following is a 463-amino-acid chain: ATP sulfurylase 1, chloroplastic (463 aa).

Residues 1 to 48 (MASMAAVLSKTPFLSQPLTKSSPNSDLPFAAVSFPSKSLRRRVGSIRA) constitute a chloroplast transit peptide.

The protein belongs to the sulfate adenylyltransferase family. In terms of assembly, homotetramer.

The protein localises to the plastid. It localises to the chloroplast stroma. The enzyme catalyses sulfate + ATP + H(+) = adenosine 5'-phosphosulfate + diphosphate. Its pathway is sulfur metabolism; hydrogen sulfide biosynthesis; sulfite from sulfate: step 1/3. Mediates selenate (Se) reduction, and promotes Se and sulfur (S) uptake and assimilation. In Arabidopsis thaliana (Mouse-ear cress), this protein is ATP sulfurylase 1, chloroplastic (APS1).